The chain runs to 48 residues: Ambineela (48 aa).

In terms of assembly, monomer. The blue color is due to an unidentified non-fluorescent cofactor, covalently bound to it.

Its function is as follows. Ambineela is a blue protein and has a pI of 8.7. The protein is Ambineela of Acidianus ambivalens (Desulfurolobus ambivalens).